The following is a 269-amino-acid chain: 5'-nucleotidase SurE (269 aa).

The a divalent metal cation site is built by Asp-11, Asp-12, Ser-43, and Asn-101.

The protein belongs to the SurE nucleotidase family. The cofactor is a divalent metal cation.

It is found in the cytoplasm. The enzyme catalyses a ribonucleoside 5'-phosphate + H2O = a ribonucleoside + phosphate. In terms of biological role, nucleotidase that shows phosphatase activity on nucleoside 5'-monophosphates. In Prochlorococcus marinus subsp. pastoris (strain CCMP1986 / NIES-2087 / MED4), this protein is 5'-nucleotidase SurE.